Reading from the N-terminus, the 273-residue chain is Proteasome subunit beta type-10 (273 aa).

N-acetylmethionine is present on M1. A propeptide spans 1–39 (MLKQAVEPTGGFSFENCQRNASLEHVLPGLRVPHARKTG) (removed in mature form). T40 (nucleophile) is an active-site residue.

Belongs to the peptidase T1B family. In terms of assembly, the 26S proteasome consists of a 20S proteasome core and two 19S regulatory subunits. The 20S proteasome core is composed of 28 subunits that are arranged in four stacked rings, resulting in a barrel-shaped structure. The two end rings are each formed by seven alpha subunits, and the two central rings are each formed by seven beta subunits. The catalytic chamber with the active sites is on the inside of the barrel. Component of the immunoproteasome, where it displaces the equivalent housekeeping subunit PSMB7. Component of the spermatoproteasome, a form of the proteasome specifically found in testis. In terms of processing, autocleaved. The resulting N-terminal Thr residue of the mature subunit is responsible for the nucleophile proteolytic activity. As to expression, detected in liver (at protein level).

The protein localises to the cytoplasm. It localises to the nucleus. It carries out the reaction Cleavage of peptide bonds with very broad specificity.. The proteasome is a multicatalytic proteinase complex which is characterized by its ability to cleave peptides with Arg, Phe, Tyr, Leu, and Glu adjacent to the leaving group at neutral or slightly basic pH. The proteasome has an ATP-dependent proteolytic activity. This subunit is involved in antigen processing to generate class I binding peptides. Plays a role in determining the T-cell repertoire for an antiviral T-cell response. The polypeptide is Proteasome subunit beta type-10 (Psmb10) (Mus musculus (Mouse)).